The chain runs to 477 residues: Transmembrane and coiled-coil domain protein 3 (477 aa).

At Ser46 the chain carries Phosphoserine. Residues 112-153 (KQVFEKKNQKSAHSIAQLQKKLEQYHRKLREIEQNGASRSSK) are a coiled coil. Disordered stretches follow at residues 168-188 (KDAH…KSGM) and 249-277 (PKYG…GAGG). Ser253 is subject to Phosphoserine. Over residues 258–273 (SSGTSGSADSNGNQSF) the composition is skewed to polar residues. Residues 282-398 (DSQGKLAVIL…KLELHQQEQQ (117 aa)) are a coiled coil. 2 helical membrane-spanning segments follow: residues 417 to 437 (VILA…KFVS) and 450 to 470 (FFAV…LCAI).

Belongs to the TEX28 family. In terms of assembly, may form homodimers and heterodimers with TMCC2 or TMCC3 via the coiled-coil domains. Interacts with ribosomal proteins RPL4 and RPS6. In terms of tissue distribution, widely expressed, with highest levels in brain, spinal cord and testis.

The protein localises to the endoplasmic reticulum membrane. In Homo sapiens (Human), this protein is Transmembrane and coiled-coil domain protein 3.